A 118-amino-acid polypeptide reads, in one-letter code: Small ribosomal subunit protein uS13 (118 aa).

A disordered region spans residues 94-118 (SLPVHGQRTKTNARTCKGPRKPIKK).

Belongs to the universal ribosomal protein uS13 family. Part of the 30S ribosomal subunit. Forms a loose heterodimer with protein S19. Forms two bridges to the 50S subunit in the 70S ribosome.

Located at the top of the head of the 30S subunit, it contacts several helices of the 16S rRNA. In the 70S ribosome it contacts the 23S rRNA (bridge B1a) and protein L5 of the 50S subunit (bridge B1b), connecting the 2 subunits; these bridges are implicated in subunit movement. Contacts the tRNAs in the A and P-sites. The sequence is that of Small ribosomal subunit protein uS13 from Buchnera aphidicola subsp. Acyrthosiphon pisum (strain 5A).